The chain runs to 433 residues: F-box only protein 15 (433 aa).

The F-box domain occupies 1 to 41 (MPSEILVKILSYLDAVTLVCIGCVSRRFYHLADDNLIWVRK).

Directly interacts with SKP1 and CUL1. In terms of tissue distribution, expressed in testis.

Its function is as follows. Substrate-recognition component of the SCF (SKP1-CUL1-F-box protein)-type E3 ubiquitin ligase complex. This chain is F-box only protein 15 (Fbxo15), found in Mus musculus (Mouse).